The following is a 95-amino-acid chain: Aspartyl/glutamyl-tRNA(Asn/Gln) amidotransferase subunit C (95 aa).

Belongs to the GatC family. As to quaternary structure, heterotrimer of A, B and C subunits.

It carries out the reaction L-glutamyl-tRNA(Gln) + L-glutamine + ATP + H2O = L-glutaminyl-tRNA(Gln) + L-glutamate + ADP + phosphate + H(+). The catalysed reaction is L-aspartyl-tRNA(Asn) + L-glutamine + ATP + H2O = L-asparaginyl-tRNA(Asn) + L-glutamate + ADP + phosphate + 2 H(+). In terms of biological role, allows the formation of correctly charged Asn-tRNA(Asn) or Gln-tRNA(Gln) through the transamidation of misacylated Asp-tRNA(Asn) or Glu-tRNA(Gln) in organisms which lack either or both of asparaginyl-tRNA or glutaminyl-tRNA synthetases. The reaction takes place in the presence of glutamine and ATP through an activated phospho-Asp-tRNA(Asn) or phospho-Glu-tRNA(Gln). The chain is Aspartyl/glutamyl-tRNA(Asn/Gln) amidotransferase subunit C from Xanthobacter autotrophicus (strain ATCC BAA-1158 / Py2).